Consider the following 376-residue polypeptide: MYLKTLHLRHFRNYYDQKVEFTAAKTILVGNNAQGKSNLLEAVELLATLRSHRMARDRDFVQEEEPVAQINATLERDTGVSDLSLILRRNGRRTVALNGEPLRRQMDFLGVLNAVQFSSLDLELVRGSPEVRRNWLDTLLIQLEPVYAHILQQYNQVLRQRNAYLKKLQDSALTTQDSALAIWDAQLVTTGTKVIRRRDRALARLAPLATAWHTSISGSTEVLQINYTPNVQLVKNQPEEVQQAFLSQLQQRAVPEIYRGTTLVGPHRDEVELTINQTPARQYGSQGQQRTLVLALKLAELQLIEEVVKEPPLLLLDDVLAELDPSRQNQLLDTIQDRFQTLITTTHLSSFDAQWLNSSQILFVEQGKISTSNAVR.

30-37 is an ATP binding site; the sequence is GNNAQGKS.

Belongs to the RecF family.

Its subcellular location is the cytoplasm. Its function is as follows. The RecF protein is involved in DNA metabolism; it is required for DNA replication and normal SOS inducibility. RecF binds preferentially to single-stranded, linear DNA. It also seems to bind ATP. This chain is DNA replication and repair protein RecF, found in Nostoc sp. (strain PCC 7120 / SAG 25.82 / UTEX 2576).